Consider the following 290-residue polypeptide: Phosphatidylglycerol--prolipoprotein diacylglyceryl transferase (290 aa).

7 helical membrane-spanning segments follow: residues 21–41 (VSLHWYGLMYLVGFVFAMWLA), 60–80 (LLYAGFLGVFVGGRVGYVLFY), 96–116 (WDGGMSFHGGLMGVILVMFWF), 130–150 (FIAPLIPFGLGAGRLGNFING), 198–218 (SQLYELLLEGVVLFIILNLFI), 225–245 (GAVSGLFLIGYGAFRIIVEAF), and 258–278 (VISMGQILSVPMVVAGIIMMI). Arg143 contacts a 1,2-diacyl-sn-glycero-3-phospho-(1'-sn-glycerol).

It belongs to the Lgt family.

Its subcellular location is the cell inner membrane. It catalyses the reaction L-cysteinyl-[prolipoprotein] + a 1,2-diacyl-sn-glycero-3-phospho-(1'-sn-glycerol) = an S-1,2-diacyl-sn-glyceryl-L-cysteinyl-[prolipoprotein] + sn-glycerol 1-phosphate + H(+). It functions in the pathway protein modification; lipoprotein biosynthesis (diacylglyceryl transfer). Catalyzes the transfer of the diacylglyceryl group from phosphatidylglycerol to the sulfhydryl group of the N-terminal cysteine of a prolipoprotein, the first step in the formation of mature lipoproteins. In Serratia proteamaculans (strain 568), this protein is Phosphatidylglycerol--prolipoprotein diacylglyceryl transferase.